A 184-amino-acid polypeptide reads, in one-letter code: Probable RNA 2'-phosphotransferase (184 aa).

This sequence belongs to the KptA/TPT1 family.

Removes the 2'-phosphate from RNA via an intermediate in which the phosphate is ADP-ribosylated by NAD followed by a presumed transesterification to release the RNA and generate ADP-ribose 1''-2''-cyclic phosphate (APPR&gt;P). May function as an ADP-ribosylase. This chain is Probable RNA 2'-phosphotransferase, found in Escherichia coli O6:K15:H31 (strain 536 / UPEC).